The primary structure comprises 212 residues: MSHLGLADVHQSEDATPDLESFTGFGNSAAEAFIQSLAGMVNQGDVETMIRAQKQMLQRFEKTNEMLLNCNALSQSRLKSASEDFKRHVKCLSEMKKDLDYIFRKIRIIKQKLQSQFPAIYAEVQPQRSSLAEEAEDDTEAQAKKTAETPAPAAAKPVLSTKKSAATIEYVQMEEAVDNGTVEIENELIKRVCSVETANPNDSSDCTSEDTG.

The segment at 128 to 159 (RSSLAEEAEDDTEAQAKKTAETPAPAAAKPVL) is disordered. Low complexity predominate over residues 148 to 157 (ETPAPAAAKP).

It belongs to the KXD1 family.

The sequence is that of KxDL motif-containing protein CG10681 from Drosophila melanogaster (Fruit fly).